A 318-amino-acid polypeptide reads, in one-letter code: Putative 2-hydroxyacid dehydrogenase SSP0606 (318 aa).

NAD(+) contacts are provided by residues 156 to 157 (EI), 235 to 237 (ASR), and D261. R237 is an active-site residue. E266 is an active-site residue. Residue H284 is the Proton donor of the active site. NAD(+) is bound at residue 284–287 (HIGN).

This sequence belongs to the D-isomer specific 2-hydroxyacid dehydrogenase family.

The sequence is that of Putative 2-hydroxyacid dehydrogenase SSP0606 from Staphylococcus saprophyticus subsp. saprophyticus (strain ATCC 15305 / DSM 20229 / NCIMB 8711 / NCTC 7292 / S-41).